Here is a 457-residue protein sequence, read N- to C-terminus: MMEGQQHGEQLKRGLKNRHIQLIALGGAIGTGLFLGSASVIQSAGPGIILGYAIAGFIAFLIMRQLGEMVVEEPVAGSFSHFAYKYWGSFAGFASGWNYWVLYVLVAMAELTAVGKYIQFWYPEIPTWVSAAVFFVVINAINLTNVTVFGEMEFWFAIIKVIAVVAMIIFGGWLLFSGNGGPQASVSNLWDQGGFLPHGFTGLVMMMAIIMFSFGGLELVGITAAEADNPEQSIPKATNQVIYRILIFYIGSLAVLLSLMPWTRVTADTSPFVLIFHELGDTFVANALNIVVLTAALSVYNSCVYCNSRMLFGLAQQGNAPKALASVDKRGVPVNTILVSALVTALCVLINYLAPESAFGLLMALVVSALVINWAMISLAHMKFRRAKQEQGVVTRFPALLYPLGNWICLLFMAVVLVIMLMTPGMAISVYLIPVWLVVLGIGYLFKEKTAKAVKAH.

Residues 1-19 (MMEGQQHGEQLKRGLKNRH) are Cytoplasmic-facing. A helical transmembrane segment spans residues 20–40 (IQLIALGGAIGTGLFLGSASV). The Periplasmic segment spans residues 41 to 42 (IQ). The helical transmembrane segment at 43 to 63 (SAGPGIILGYAIAGFIAFLIM) threads the bilayer. The Cytoplasmic segment spans residues 64–86 (RQLGEMVVEEPVAGSFSHFAYKY). The helical transmembrane segment at 87 to 107 (WGSFAGFASGWNYWVLYVLVA) threads the bilayer. At 108–117 (MAELTAVGKY) the chain is on the periplasmic side. Residues 118 to 138 (IQFWYPEIPTWVSAAVFFVVI) traverse the membrane as a helical segment. Over 139–155 (NAINLTNVTVFGEMEFW) the chain is Cytoplasmic. A helical transmembrane segment spans residues 156 to 176 (FAIIKVIAVVAMIIFGGWLLF). Residues 177–201 (SGNGGPQASVSNLWDQGGFLPHGFT) lie on the Periplasmic side of the membrane. The chain crosses the membrane as a helical span at residues 202-222 (GLVMMMAIIMFSFGGLELVGI). Residues 223–240 (TAAEADNPEQSIPKATNQ) lie on the Cytoplasmic side of the membrane. The chain crosses the membrane as a helical span at residues 241 to 261 (VIYRILIFYIGSLAVLLSLMP). Residues 262–271 (WTRVTADTSP) lie on the Periplasmic side of the membrane. A helical transmembrane segment spans residues 272-292 (FVLIFHELGDTFVANALNIVV). The Cytoplasmic segment spans residues 293 to 333 (LTAALSVYNSCVYCNSRMLFGLAQQGNAPKALASVDKRGVP). The chain crosses the membrane as a helical span at residues 334-354 (VNTILVSALVTALCVLINYLA). Over 355 to 358 (PESA) the chain is Periplasmic. Residues 359-379 (FGLLMALVVSALVINWAMISL) form a helical membrane-spanning segment. Residues 380 to 407 (AHMKFRRAKQEQGVVTRFPALLYPLGNW) lie on the Cytoplasmic side of the membrane. A helical membrane pass occupies residues 408–428 (ICLLFMAVVLVIMLMTPGMAI). Position 429 (serine 429) is a topological domain, periplasmic. A helical transmembrane segment spans residues 430–450 (VYLIPVWLVVLGIGYLFKEKT). Topologically, residues 451–457 (AKAVKAH) are cytoplasmic.

This sequence belongs to the amino acid-polyamine-organocation (APC) superfamily. Amino acid transporter (AAT) (TC 2.A.3.1) family.

The protein resides in the cell inner membrane. The enzyme catalyses L-phenylalanine(in) + H(+)(in) = L-phenylalanine(out) + H(+)(out). The catalysed reaction is L-tryptophan(in) + H(+)(in) = L-tryptophan(out) + H(+)(out). It catalyses the reaction L-tyrosine(in) + H(+)(in) = L-tyrosine(out) + H(+)(out). Functionally, permease that is involved in the active transport across the cytoplasmic membrane of all three aromatic amino acids, phenylalanine, tyrosine and tryptophan. The sequence is that of Aromatic amino acid transport protein AroP (aroP) from Escherichia coli O157:H7.